A 189-amino-acid polypeptide reads, in one-letter code: Inner membrane-spanning protein YciB (189 aa).

5 helical membrane passes run 3 to 23 (LLID…WGIY), 47 to 67 (IEPM…ATLL), 76 to 96 (WKPT…QLFF), 121 to 141 (WSWT…AHAF), and 149 to 169 (FKLF…ALYL).

The protein belongs to the YciB family.

The protein resides in the cell inner membrane. Functionally, plays a role in cell envelope biogenesis, maintenance of cell envelope integrity and membrane homeostasis. This chain is Inner membrane-spanning protein YciB, found in Paracidovorax citrulli (strain AAC00-1) (Acidovorax citrulli).